A 244-amino-acid polypeptide reads, in one-letter code: 5'-nucleotidase SurE (244 aa).

Residues D8, D9, S39, and N96 each contribute to the a divalent metal cation site.

It belongs to the SurE nucleotidase family. The cofactor is a divalent metal cation.

The protein resides in the cytoplasm. The catalysed reaction is a ribonucleoside 5'-phosphate + H2O = a ribonucleoside + phosphate. In terms of biological role, nucleotidase that shows phosphatase activity on nucleoside 5'-monophosphates. The chain is 5'-nucleotidase SurE from Thermus thermophilus (strain ATCC 27634 / DSM 579 / HB8).